Consider the following 971-residue polypeptide: UPF0182 protein CMS1887 (971 aa).

The next 7 membrane-spanning stretches (helical) occupy residues 16-36, 56-76, 108-128, 161-181, 205-225, 255-275, and 281-301; these read LAIT…FAGF, WGAG…PVFV, LAMF…ASSG, FYHA…LGVL, IQIA…IWLD, TILA…AAIG, and IIGT…YPAI. Residues 687 to 702 show a composition bias toward polar residues; that stretch reads QDLWTTPNDPTATTEA. Disordered regions lie at residues 687–706 and 874–924; these read QDLW…GTPA and GATA…AQDV. Low complexity-rich tracts occupy residues 884 to 900 and 907 to 921; these read PTTP…TDGA and STPT…AAPA.

The protein belongs to the UPF0182 family.

It is found in the cell membrane. This is UPF0182 protein CMS1887 from Clavibacter sepedonicus (Clavibacter michiganensis subsp. sepedonicus).